The following is a 148-amino-acid chain: Lipoprotein MlpH (148 aa).

The first 17 residues, 1 to 17 (MKIINILFCLFLLMLNG), serve as a signal peptide directing secretion. Cys-18 is lipidated: N-palmitoyl cysteine. Cys-18 is lipidated: S-diacylglycerol cysteine. The tract at residues 26 to 61 (LKNNAQQTKSRRKRDLTQKEVTQEKPKSKEELLREK) is disordered. Residues 40–61 (DLTQKEVTQEKPKSKEELLREK) are compositionally biased toward basic and acidic residues.

The protein belongs to the Multicopy lipoprotein (Mlp) family.

It localises to the cell outer membrane. An outer membrane protein that may participate in pathogenesis. Some human Lyme disease patients have antibodies against this protein. The Mlp proteins probably undergo intragenic recombination, generating new alleles. The protein is Lipoprotein MlpH of Borreliella burgdorferi (strain ATCC 35210 / DSM 4680 / CIP 102532 / B31) (Borrelia burgdorferi).